The following is a 428-amino-acid chain: D-amino acid dehydrogenase (428 aa).

Residue 3–17 (VVILGSGVVGVASAY) coordinates FAD.

It belongs to the DadA oxidoreductase family. Requires FAD as cofactor.

The catalysed reaction is a D-alpha-amino acid + A + H2O = a 2-oxocarboxylate + AH2 + NH4(+). The protein operates within amino-acid degradation; D-alanine degradation; NH(3) and pyruvate from D-alanine: step 1/1. Its function is as follows. Oxidative deamination of D-amino acids. This Burkholderia pseudomallei (strain 1106a) protein is D-amino acid dehydrogenase.